The following is a 173-amino-acid chain: Nicotinamide-nucleotide adenylyltransferase (173 aa).

It belongs to the archaeal NMN adenylyltransferase family.

The protein localises to the cytoplasm. The catalysed reaction is beta-nicotinamide D-ribonucleotide + ATP + H(+) = diphosphate + NAD(+). The protein operates within cofactor biosynthesis; NAD(+) biosynthesis; NAD(+) from nicotinamide D-ribonucleotide: step 1/1. This is Nicotinamide-nucleotide adenylyltransferase from Methanosarcina barkeri (strain Fusaro / DSM 804).